A 438-amino-acid chain; its full sequence is 26S proteasome regulatory subunit 6A (438 aa).

Residues 1–24 form a disordered region; that stretch reads MSTLEELDALDQSQQGGSSNNEGL. Residues 11–22 show a composition bias toward polar residues; it reads DQSQQGGSSNNE. 226-233 contributes to the ATP binding site; that stretch reads GPPGTGKT.

It belongs to the AAA ATPase family.

Its subcellular location is the cytoplasm. It localises to the nucleus. Functionally, the 26S proteasome is involved in the ATP-dependent degradation of ubiquitinated proteins. The regulatory (or ATPase) complex confers ATP dependency and substrate specificity to the 26S complex. This is 26S proteasome regulatory subunit 6A (tbp1) from Schizosaccharomyces pombe (strain 972 / ATCC 24843) (Fission yeast).